The following is a 133-amino-acid chain: Triatox (133 aa).

Residues 1–22 (MTTLRVLLAVCCAAYCILAEDV) form the signal peptide. One can recognise a CUB domain in the interval 23 to 125 (TVPANGELKL…RAMCTVYSAE (103 aa)). A disulfide bond links Cys-70 and Cys-86.

This sequence belongs to the venom CUB family. In terms of tissue distribution, expressed by the venom gland.

Its subcellular location is the secreted. Functionally, may function as an antimicrobial peptide and may be related to the innate defense of the insect in the salivary glands. The sequence is that of Triatox from Triatoma infestans (Assassin bug).